A 634-amino-acid polypeptide reads, in one-letter code: Putative peptidoglycan O-acetyltransferase YrhL (634 aa).

Helical transmembrane passes span Tyr-10 to Leu-30, Gly-38 to Leu-58, Arg-79 to Asp-99, Ala-110 to Phe-130, Leu-145 to Ile-165, Leu-172 to Glu-192, Phe-244 to Leu-264, Leu-270 to Leu-290, Tyr-307 to Gly-327, Pro-329 to Tyr-349, and Met-385 to Ala-405. Positions Lys-413–Thr-481 are disordered. Over residues Trp-414–Ser-429 the composition is skewed to polar residues. 2 stretches are compositionally biased toward basic and acidic residues: residues Gly-430–Thr-447 and Lys-455–Thr-470.

It belongs to the acyltransferase 3 family.

Its subcellular location is the cell membrane. This chain is Putative peptidoglycan O-acetyltransferase YrhL (yrhL), found in Bacillus subtilis (strain 168).